A 254-amino-acid polypeptide reads, in one-letter code: Diphthine synthase (254 aa).

S-adenosyl-L-methionine is bound by residues Asp83, Leu86, 111–112 (SI), Leu163, and Val205.

Belongs to the diphthine synthase family. Homodimer.

It carries out the reaction 2-[(3S)-amino-3-carboxypropyl]-L-histidyl-[translation elongation factor 2] + 3 S-adenosyl-L-methionine = diphthine-[translation elongation factor 2] + 3 S-adenosyl-L-homocysteine + 3 H(+). The protein operates within protein modification; peptidyl-diphthamide biosynthesis. Functionally, S-adenosyl-L-methionine-dependent methyltransferase that catalyzes the trimethylation of the amino group of the modified target histidine residue in translation elongation factor 2 (EF-2), to form an intermediate called diphthine. The three successive methylation reactions represent the second step of diphthamide biosynthesis. This chain is Diphthine synthase, found in Pyrobaculum aerophilum (strain ATCC 51768 / DSM 7523 / JCM 9630 / CIP 104966 / NBRC 100827 / IM2).